A 118-amino-acid polypeptide reads, in one-letter code: Holo-[acyl-carrier-protein] synthase (118 aa).

Residues Asp8 and Glu58 each coordinate Mg(2+).

The protein belongs to the P-Pant transferase superfamily. AcpS family. Requires Mg(2+) as cofactor.

The protein resides in the cytoplasm. It catalyses the reaction apo-[ACP] + CoA = holo-[ACP] + adenosine 3',5'-bisphosphate + H(+). Transfers the 4'-phosphopantetheine moiety from coenzyme A to a Ser of acyl-carrier-protein. In Lactobacillus helveticus (strain DPC 4571), this protein is Holo-[acyl-carrier-protein] synthase.